We begin with the raw amino-acid sequence, 1744 residues long: Tanabin (1744 aa).

The interval 1–12 is head; that stretch reads MEGYLASVSLGE. The interval 8–48 is coil 1A; it reads VSLGEESTQMWSLNKRLEAYLSRVKALEEENELLRKEIHSL. Residues 13–320 enclose the IF rod domain; that stretch reads ESTQMWSLNK…SLLEAESTRI (308 aa). The tract at residues 49-60 is linker 1; that stretch reads RSSKSERCWKKK. Positions 61 to 156 are coil 1B; it reads HHEEMMKLRD…RDHEEEKALM (96 aa). Positions 157–179 are linker 12; it reads EEEIASFSQRLENFRVAPVAFKP. The interval 180-193 is coil 2A; it reads VEVDDYARKLSEIW. The segment at 194 to 199 is linker 2; sequence QGAVEE. The coil 2B stretch occupies residues 200–314; that stretch reads YKSEVSVLEA…EVATYRSLLE (115 aa). The tract at residues 315–1744 is tail; sequence AESTRIYTDY…KKALRWKRMF (1430 aa). Basic and acidic residues-rich tracts occupy residues 341 to 371 and 785 to 815; these read RRRQSEDTRKTVSKDHRQSYSKKQIGDKNEL and HSHHEETKTSESIAVEHNRMESEHAEVDKSS. Disordered regions lie at residues 341–372, 785–816, 976–996, 1032–1093, 1340–1470, 1485–1506, and 1560–1722; these read RRRQSEDTRKTVSKDHRQSYSKKQIGDKNELQ, HSHHEETKTSESIAVEHNRMESEHAEVDKSSE, EENQLSENEGNQNFGGNDIEE, SMED…QQED, DSDL…FGDV, SGLAQEPSYLGDNEESEDSMEN, and AREK…LNGH. Residues 980–990 are compositionally biased toward polar residues; sequence LSENEGNQNFG. Positions 1034–1056 are enriched in acidic residues; sequence EDEEEQNNPETEDNIGLEQESDQ. Residues 1074 to 1086 show a composition bias toward basic and acidic residues; the sequence is VVFKPEDMSDKSE. The span at 1340 to 1351 shows a compositional bias: acidic residues; sequence DSDLESTEEQVQ. A compositionally biased stretch (basic and acidic residues) spans 1352–1367; sequence ETERIPFKPEDSKMEN. Over residues 1368-1377 the composition is skewed to acidic residues; the sequence is ENSESEESVD. Over residues 1386–1398 the composition is skewed to basic and acidic residues; it reads HKSEEFEISKDYQ. Residues 1412–1421 are compositionally biased toward acidic residues; it reads LEDEFEDLTE. Residues 1423-1432 show a composition bias toward basic and acidic residues; sequence PDVHEEHQNN. Residues 1433–1442 are compositionally biased toward polar residues; the sequence is DDSGASTFIT. Positions 1445–1460 are enriched in basic and acidic residues; it reads DEDKEREVRESVSKDE. The span at 1496–1505 shows a compositional bias: acidic residues; that stretch reads DNEESEDSME. 3 stretches are compositionally biased toward polar residues: residues 1576–1586, 1597–1621, and 1629–1639; these read EFTNENQSASP, EDSVISDNEGTTSSYEDLPNATSIS, and SNISTTEQSST. The span at 1680 to 1691 shows a compositional bias: acidic residues; the sequence is RSEDEELDDEGS. Residues 1698–1709 show a composition bias toward basic and acidic residues; it reads NDEKANGEHKDV.

This sequence belongs to the intermediate filament family. As to expression, growth cones of embryonic vertebrate neurons.

This is Tanabin from Xenopus laevis (African clawed frog).